A 130-amino-acid polypeptide reads, in one-letter code: Fluoride-specific ion channel FluC 2 (130 aa).

The next 4 helical transmembrane spans lie at 4–24 (GLSTYKSFFLVAFGAVPGAIC), 38–58 (NLWGILLVNSSACLLLGFFLA), 72–92 (LYLLLCVGFLGSFSTFSSLIL), and 103–123 (WMELFLFTFTSIGLGIIFISL). Gly82 and Ser85 together coordinate Na(+).

Belongs to the fluoride channel Fluc/FEX (TC 1.A.43) family.

The protein resides in the cell inner membrane. It catalyses the reaction fluoride(in) = fluoride(out). Na(+) is not transported, but it plays an essential structural role and its presence is essential for fluoride channel function. In terms of biological role, fluoride-specific ion channel. Important for reducing fluoride concentration in the cell, thus reducing its toxicity. In Prochlorococcus marinus (strain SARG / CCMP1375 / SS120), this protein is Fluoride-specific ion channel FluC 2.